A 172-amino-acid polypeptide reads, in one-letter code: Ribosome maturation factor RimM (172 aa).

Residues 94–167 enclose the PRC barrel domain; sequence ENEFYLFQLK…FIKVELLPGM (74 aa).

It belongs to the RimM family. In terms of assembly, binds ribosomal protein uS19.

It localises to the cytoplasm. An accessory protein needed during the final step in the assembly of 30S ribosomal subunit, possibly for assembly of the head region. Essential for efficient processing of 16S rRNA. May be needed both before and after RbfA during the maturation of 16S rRNA. It has affinity for free ribosomal 30S subunits but not for 70S ribosomes. This chain is Ribosome maturation factor RimM, found in Carboxydothermus hydrogenoformans (strain ATCC BAA-161 / DSM 6008 / Z-2901).